The chain runs to 570 residues: Sulfite reductase [NADPH] hemoprotein beta-component (570 aa).

4 residues coordinate [4Fe-4S] cluster: Cys434, Cys440, Cys479, and Cys483. Cys483 provides a ligand contact to siroheme.

The protein belongs to the nitrite and sulfite reductase 4Fe-4S domain family. In terms of assembly, alpha(8)-beta(8). The alpha component is a flavoprotein, the beta component is a hemoprotein. Requires siroheme as cofactor. The cofactor is [4Fe-4S] cluster.

The catalysed reaction is hydrogen sulfide + 3 NADP(+) + 3 H2O = sulfite + 3 NADPH + 4 H(+). The protein operates within sulfur metabolism; hydrogen sulfide biosynthesis; hydrogen sulfide from sulfite (NADPH route): step 1/1. Its function is as follows. Component of the sulfite reductase complex that catalyzes the 6-electron reduction of sulfite to sulfide. This is one of several activities required for the biosynthesis of L-cysteine from sulfate. This Salmonella agona (strain SL483) protein is Sulfite reductase [NADPH] hemoprotein beta-component.